Consider the following 204-residue polypeptide: HTH-type transcriptional repressor KstR2 (204 aa).

The 61-residue stretch at S13–L73 folds into the HTH tetR-type domain. Positions T36–F55 form a DNA-binding region, H-T-H motif.

Homodimer.

Functionally, controls the expression of a small regulon that may play a role in the utilization of cholesterol. In Rhodococcus jostii (strain RHA1), this protein is HTH-type transcriptional repressor KstR2 (kstR2).